A 448-amino-acid chain; its full sequence is Ribosomal protein uS12 methylthiotransferase RimO (448 aa).

In terms of domain architecture, MTTase N-terminal spans P16 to P126. Residues C25, C61, C90, C157, C161, and C164 each contribute to the [4Fe-4S] cluster site. A Radical SAM core domain is found at L143–R380. Residues R383–V448 enclose the TRAM domain.

It belongs to the methylthiotransferase family. RimO subfamily. It depends on [4Fe-4S] cluster as a cofactor.

The protein localises to the cytoplasm. It catalyses the reaction L-aspartate(89)-[ribosomal protein uS12]-hydrogen + (sulfur carrier)-SH + AH2 + 2 S-adenosyl-L-methionine = 3-methylsulfanyl-L-aspartate(89)-[ribosomal protein uS12]-hydrogen + (sulfur carrier)-H + 5'-deoxyadenosine + L-methionine + A + S-adenosyl-L-homocysteine + 2 H(+). In terms of biological role, catalyzes the methylthiolation of an aspartic acid residue of ribosomal protein uS12. The polypeptide is Ribosomal protein uS12 methylthiotransferase RimO (Methylorubrum extorquens (strain PA1) (Methylobacterium extorquens)).